Here is a 226-residue protein sequence, read N- to C-terminus: Lipoprotein-releasing system ATP-binding protein LolD (226 aa).

The ABC transporter domain maps to 5–226 (LKATNINKIY…LLRNGHWENY (222 aa)). 41 to 48 (GTSGSGKS) is a binding site for ATP.

It belongs to the ABC transporter superfamily. Lipoprotein translocase (TC 3.A.1.125) family. As to quaternary structure, the complex is composed of two ATP-binding proteins (LolD) and two transmembrane proteins (LolC and LolE).

Its subcellular location is the cell inner membrane. Its function is as follows. Part of the ABC transporter complex LolCDE involved in the translocation of mature outer membrane-directed lipoproteins, from the inner membrane to the periplasmic chaperone, LolA. Responsible for the formation of the LolA-lipoprotein complex in an ATP-dependent manner. The chain is Lipoprotein-releasing system ATP-binding protein LolD from Psychrobacter cryohalolentis (strain ATCC BAA-1226 / DSM 17306 / VKM B-2378 / K5).